A 231-amino-acid polypeptide reads, in one-letter code: 7-cyano-7-deazaguanine synthase (231 aa).

Residue 8-18 (FSGGQDSTTCL) coordinates ATP. 4 residues coordinate Zn(2+): C188, C197, C200, and C203.

It belongs to the QueC family. Zn(2+) serves as cofactor.

It catalyses the reaction 7-carboxy-7-deazaguanine + NH4(+) + ATP = 7-cyano-7-deazaguanine + ADP + phosphate + H2O + H(+). Its pathway is purine metabolism; 7-cyano-7-deazaguanine biosynthesis. Its function is as follows. Catalyzes the ATP-dependent conversion of 7-carboxy-7-deazaguanine (CDG) to 7-cyano-7-deazaguanine (preQ(0)). This is 7-cyano-7-deazaguanine synthase from Escherichia coli O1:K1 / APEC.